A 358-amino-acid chain; its full sequence is Methylthioribose-1-phosphate isomerase (358 aa).

Substrate is bound by residues 54–56 (RGA), Arg-96, and Gln-205. The active-site Proton donor is the Asp-246. 256 to 257 (SK) contacts substrate.

This sequence belongs to the eIF-2B alpha/beta/delta subunits family. MtnA subfamily.

The catalysed reaction is 5-(methylsulfanyl)-alpha-D-ribose 1-phosphate = 5-(methylsulfanyl)-D-ribulose 1-phosphate. The protein operates within amino-acid biosynthesis; L-methionine biosynthesis via salvage pathway; L-methionine from S-methyl-5-thio-alpha-D-ribose 1-phosphate: step 1/6. Catalyzes the interconversion of methylthioribose-1-phosphate (MTR-1-P) into methylthioribulose-1-phosphate (MTRu-1-P). The polypeptide is Methylthioribose-1-phosphate isomerase (Pseudomonas putida (strain GB-1)).